The sequence spans 649 residues: Ubiquitin-associated and SH3 domain-containing protein B (649 aa).

Serine 20 is subject to Phosphoserine. Residue threonine 23 is modified to Phosphothreonine. The 50-residue stretch at 27 to 76 (NRQQRPGTIKHGSALDVLLSMGFPRARAQKALASTGGRSVQAACDWLFSH) folds into the UBA domain. The SH3 domain maps to 254–319 (ANHETLQVIY…PENYITKADE (66 aa)). A protein tyrosine phosphatase region spans residues 380–649 (GPQKRCLFVC…FNWRETLLQE (270 aa)). Arginine 390 is an active-site residue. Histidine 391 acts as the Tele-phosphohistidine intermediate in catalysis. Histidine 576 is a catalytic residue.

As to quaternary structure, homodimer. Interacts with JAK2 (in vitro). Interacts with CBL. Part of a complex containing CBL and activated EGFR. Interacts with ubiquitin and with mono-ubiquitinated proteins. Interacts with ZAP70 (ubiquitinated form).

The protein resides in the cytoplasm. The protein localises to the nucleus. It catalyses the reaction O-phospho-L-tyrosyl-[protein] + H2O = L-tyrosyl-[protein] + phosphate. Interferes with CBL-mediated down-regulation and degradation of receptor-type tyrosine kinases. Promotes accumulation of activated target receptors, such as T-cell receptors and EGFR, on the cell surface. Exhibits tyrosine phosphatase activity toward several substrates including EGFR, FAK, SYK, and ZAP70. Down-regulates proteins that are dually modified by both protein tyrosine phosphorylation and ubiquitination. In Homo sapiens (Human), this protein is Ubiquitin-associated and SH3 domain-containing protein B (UBASH3B).